The primary structure comprises 566 residues: uncharacterized protein (566 aa).

It belongs to the protein kinase superfamily. ADCK protein kinase family.

This is an uncharacterized protein from Synechocystis sp. (strain ATCC 27184 / PCC 6803 / Kazusa).